We begin with the raw amino-acid sequence, 214 residues long: Refilin-B (214 aa).

The interval 1–56 (MVGRLSLQDVPELVDAKKKGDGVLDSPDSGLPPSPSPSHWGLAAGGGGGERAAAPG) is disordered. Residues S6 and S26 each carry the phosphoserine modification.

It belongs to the Refilin family. Interacts with FLNA and FLNB.

The protein localises to the cytoplasm. Its subcellular location is the cytoskeleton. Functionally, involved in the regulation of the perinuclear actin network and nuclear shape through interaction with filamins. Plays an essential role in the formation of cartilaginous skeletal elements. In Homo sapiens (Human), this protein is Refilin-B.